The following is a 185-amino-acid chain: Ribosome-recycling factor (185 aa).

The tract at residues 135 to 159 (ANDEVKKLEKDKAITEDESKKGQDE) is disordered.

The protein belongs to the RRF family.

Its subcellular location is the cytoplasm. Responsible for the release of ribosomes from messenger RNA at the termination of protein biosynthesis. May increase the efficiency of translation by recycling ribosomes from one round of translation to another. In Campylobacter curvus (strain 525.92), this protein is Ribosome-recycling factor.